The sequence spans 140 residues: Large ribosomal subunit protein bL17 (140 aa).

The protein belongs to the bacterial ribosomal protein bL17 family. As to quaternary structure, part of the 50S ribosomal subunit. Contacts protein L32.

This Gluconobacter oxydans (strain 621H) (Gluconobacter suboxydans) protein is Large ribosomal subunit protein bL17.